Consider the following 395-residue polypeptide: L-methionine gamma-lyase (395 aa).

Pyridoxal 5'-phosphate is bound by residues 56 to 58 (YTR) and 86 to 87 (GM). Tyr-111 lines the substrate pocket. Position 206–208 (206–208 (SAT)) interacts with pyridoxal 5'-phosphate. Residue Lys-209 is modified to N6-(pyridoxal phosphate)lysine. Arg-373 is a binding site for substrate.

It belongs to the trans-sulfuration enzymes family. L-methionine gamma-lyase subfamily. In terms of assembly, homotetramer. Pyridoxal 5'-phosphate is required as a cofactor.

It catalyses the reaction L-methionine + H2O = methanethiol + 2-oxobutanoate + NH4(+). The enzyme catalyses L-homocysteine + H2O = 2-oxobutanoate + hydrogen sulfide + NH4(+) + H(+). The catalysed reaction is L-cysteine + H2O = hydrogen sulfide + pyruvate + NH4(+) + H(+). Its function is as follows. Catalyzes the alpha,gamma-elimination of L-methionine to produce methanethiol, 2-oxobutanoate and ammonia, and that of L-homocysteine. Can also use L-cysteine as substrate, catalyzing its alpha,beta-elimination; this activity seems to only minimally contribute to the production of hydrogen sulfide (H2S) by F.nucleatum in the oral cavity, which is toxic for a large variety of cells in periodontal regions. The polypeptide is L-methionine gamma-lyase (Fusobacterium nucleatum subsp. nucleatum (strain ATCC 25586 / DSM 15643 / BCRC 10681 / CIP 101130 / JCM 8532 / KCTC 2640 / LMG 13131 / VPI 4355)).